A 362-amino-acid chain; its full sequence is Cobalt-precorrin-5B C(1)-methyltransferase (362 aa).

It belongs to the CbiD family.

It catalyses the reaction Co-precorrin-5B + S-adenosyl-L-methionine = Co-precorrin-6A + S-adenosyl-L-homocysteine. The protein operates within cofactor biosynthesis; adenosylcobalamin biosynthesis; cob(II)yrinate a,c-diamide from sirohydrochlorin (anaerobic route): step 6/10. In terms of biological role, catalyzes the methylation of C-1 in cobalt-precorrin-5B to form cobalt-precorrin-6A. The protein is Cobalt-precorrin-5B C(1)-methyltransferase of Burkholderia vietnamiensis (strain G4 / LMG 22486) (Burkholderia cepacia (strain R1808)).